The chain runs to 542 residues: Propane 2-monooxygenase, hydroxylase component large subunit (542 aa).

The Fe cation site is built by glutamate 97, glutamate 127, histidine 130, glutamate 192, glutamate 226, and histidine 229.

It belongs to the TmoA/XamoA family. In terms of assembly, the propane 2-monooxygenase multicomponent enzyme system is composed of an electron transfer component and a monooxygenase component interacting with the effector protein MimD. The electron transfer component is composed of a reductase (MimB), and the monooxygenase component is formed by a large subunit (MimA) and a small subunit (MimC). Requires the presence of the chaperonin-like protein MimG to ensure a productive folding, resulting of a soluble MimA, which leads to the active form of MimABCD. The cofactor is Fe(2+).

The catalysed reaction is propane + NADH + O2 + H(+) = propan-2-ol + NAD(+) + H2O. It carries out the reaction acetone + NADH + O2 + H(+) = hydroxyacetone + NAD(+) + H2O. The enzyme catalyses butan-2-one + NADH + O2 + H(+) = 1-hydroxy-2-butanone + NAD(+) + H2O. It catalyses the reaction phenol + NADH + O2 + H(+) = hydroquinone + NAD(+) + H2O. Functionally, component of the propane 2-monooxygenase multicomponent enzyme system which is involved in the degradation of propane via the O2-dependent hydroxylation of propane. Also involved in the degradation of acetone via the O2-dependent hydroxylation of acetone. Also able to catalyze the oxidation of phenol, methylethylketone (2-butanone), 1-propanol and 2-propanol. This chain is Propane 2-monooxygenase, hydroxylase component large subunit, found in Mycolicibacterium goodii (Mycobacterium goodii).